The sequence spans 227 residues: Cytochrome c oxidase subunit 2 (227 aa).

The Mitochondrial intermembrane segment spans residues 1–14; the sequence is MAYPFQLGLQDATS. Residues 15 to 45 traverse the membrane as a helical segment; that stretch reads PIMEELTNFHDHTLMIVFLISSLVLYIISLM. Residues 46-59 are Mitochondrial matrix-facing; the sequence is LTTKLTHTSTMDAQ. Residues 60–87 form a helical membrane-spanning segment; it reads EVETIWTILPAVILILIALPSLRILYMM. Residues 88 to 227 are Mitochondrial intermembrane-facing; the sequence is DEINNPVLTV…YFENWSASMI (140 aa). Residues His161, Cys196, Glu198, Cys200, His204, and Met207 each coordinate Cu cation. Glu198 provides a ligand contact to Mg(2+). Phosphotyrosine is present on Tyr218.

This sequence belongs to the cytochrome c oxidase subunit 2 family. In terms of assembly, component of the cytochrome c oxidase (complex IV, CIV), a multisubunit enzyme composed of 14 subunits. The complex is composed of a catalytic core of 3 subunits MT-CO1, MT-CO2 and MT-CO3, encoded in the mitochondrial DNA, and 11 supernumerary subunits COX4I, COX5A, COX5B, COX6A, COX6B, COX6C, COX7A, COX7B, COX7C, COX8 and NDUFA4, which are encoded in the nuclear genome. The complex exists as a monomer or a dimer and forms supercomplexes (SCs) in the inner mitochondrial membrane with NADH-ubiquinone oxidoreductase (complex I, CI) and ubiquinol-cytochrome c oxidoreductase (cytochrome b-c1 complex, complex III, CIII), resulting in different assemblies (supercomplex SCI(1)III(2)IV(1) and megacomplex MCI(2)III(2)IV(2)). Found in a complex with TMEM177, COA6, COX18, COX20, SCO1 and SCO2. Interacts with TMEM177 in a COX20-dependent manner. Interacts with COX20. Interacts with COX16. Requires Cu cation as cofactor.

The protein localises to the mitochondrion inner membrane. It catalyses the reaction 4 Fe(II)-[cytochrome c] + O2 + 8 H(+)(in) = 4 Fe(III)-[cytochrome c] + 2 H2O + 4 H(+)(out). Functionally, component of the cytochrome c oxidase, the last enzyme in the mitochondrial electron transport chain which drives oxidative phosphorylation. The respiratory chain contains 3 multisubunit complexes succinate dehydrogenase (complex II, CII), ubiquinol-cytochrome c oxidoreductase (cytochrome b-c1 complex, complex III, CIII) and cytochrome c oxidase (complex IV, CIV), that cooperate to transfer electrons derived from NADH and succinate to molecular oxygen, creating an electrochemical gradient over the inner membrane that drives transmembrane transport and the ATP synthase. Cytochrome c oxidase is the component of the respiratory chain that catalyzes the reduction of oxygen to water. Electrons originating from reduced cytochrome c in the intermembrane space (IMS) are transferred via the dinuclear copper A center (CU(A)) of subunit 2 and heme A of subunit 1 to the active site in subunit 1, a binuclear center (BNC) formed by heme A3 and copper B (CU(B)). The BNC reduces molecular oxygen to 2 water molecules using 4 electrons from cytochrome c in the IMS and 4 protons from the mitochondrial matrix. This Dacnomys millardi (Millard's rat) protein is Cytochrome c oxidase subunit 2 (MT-CO2).